Here is a 294-residue protein sequence, read N- to C-terminus: Proteasome subunit beta (294 aa).

Residues 1 to 65 constitute a propeptide, removed in mature form; by autocatalysis; the sequence is MTADRPALRT…MESGDLAPHG (65 aa). Threonine 66 serves as the catalytic Nucleophile.

It belongs to the peptidase T1B family. In terms of assembly, the 20S proteasome core is composed of 14 alpha and 14 beta subunits that assemble into four stacked heptameric rings, resulting in a barrel-shaped structure. The two inner rings, each composed of seven catalytic beta subunits, are sandwiched by two outer rings, each composed of seven alpha subunits. The catalytic chamber with the active sites is on the inside of the barrel. Has a gated structure, the ends of the cylinder being occluded by the N-termini of the alpha-subunits. Is capped by the proteasome-associated ATPase, ARC.

The protein localises to the cytoplasm. It catalyses the reaction Cleavage of peptide bonds with very broad specificity.. The protein operates within protein degradation; proteasomal Pup-dependent pathway. The formation of the proteasomal ATPase ARC-20S proteasome complex, likely via the docking of the C-termini of ARC into the intersubunit pockets in the alpha-rings, may trigger opening of the gate for substrate entry. Interconversion between the open-gate and close-gate conformations leads to a dynamic regulation of the 20S proteasome proteolysis activity. Functionally, component of the proteasome core, a large protease complex with broad specificity involved in protein degradation. In Rhodococcus opacus (strain B4), this protein is Proteasome subunit beta.